The following is a 164-amino-acid chain: Thioredoxin domain-containing protein R443 (164 aa).

A helical transmembrane segment spans residues 8-28; sequence HIVLIVLAIILILWIISLLLC. A Thioredoxin domain is found at 36–163; that stretch reads YQVPIIQPMQ…LTQFIRSNMN (128 aa). The cysteines at positions 84 and 87 are disulfide-linked.

It belongs to the thioredoxin family.

The protein localises to the host membrane. Its subcellular location is the virion. The polypeptide is Thioredoxin domain-containing protein R443 (Acanthamoeba polyphaga mimivirus (APMV)).